The chain runs to 496 residues: Apolipoprotein N-acyltransferase (496 aa).

6 helical membrane passes run 6 to 26 (IICLLLGILSGLVFAPIFFIP), 50 to 70 (FGYLFGFGHFLSGMYWISIGV), 77 to 97 (FWWAIPFALFGLPIILAFFIS), 114 to 134 (LIFCLLWVLFEWIRSWILTGL), 148 to 168 (ILIQPLSITGIYGLSFIVIYI), and 183 to 203 (LKILLASSMLILTVMVIYGAV). A CN hydrolase domain is found at 220-464 (VQPSIPQTAK…QGLIPQKLTT (245 aa)). The active-site Proton acceptor is the Glu-259. The active site involves Lys-322. The active-site Nucleophile is the Cys-372. The helical transmembrane segment at 474–494 (FAMLLSIVFIILIHYLLSLIF) threads the bilayer.

This sequence belongs to the CN hydrolase family. Apolipoprotein N-acyltransferase subfamily.

The protein localises to the cell inner membrane. It catalyses the reaction N-terminal S-1,2-diacyl-sn-glyceryl-L-cysteinyl-[lipoprotein] + a glycerophospholipid = N-acyl-S-1,2-diacyl-sn-glyceryl-L-cysteinyl-[lipoprotein] + a 2-acyl-sn-glycero-3-phospholipid + H(+). Its pathway is protein modification; lipoprotein biosynthesis (N-acyl transfer). In terms of biological role, catalyzes the phospholipid dependent N-acylation of the N-terminal cysteine of apolipoprotein, the last step in lipoprotein maturation. The protein is Apolipoprotein N-acyltransferase of Rickettsia prowazekii (strain Madrid E).